The chain runs to 239 residues: Putative 3-methyladenine DNA glycosylase (239 aa).

The protein belongs to the DNA glycosylase MPG family.

This chain is Putative 3-methyladenine DNA glycosylase, found in Pseudomonas aeruginosa (strain UCBPP-PA14).